Reading from the N-terminus, the 693-residue chain is Elongation factor G (693 aa).

Residues 8–282 (EKTRNIGIMA…AVIDYLPSPL (275 aa)) enclose the tr-type G domain. Residues 17-24 (AHVDAGKT), 81-85 (DTPGH), and 135-138 (NKMD) each bind GTP.

The protein belongs to the TRAFAC class translation factor GTPase superfamily. Classic translation factor GTPase family. EF-G/EF-2 subfamily.

The protein localises to the cytoplasm. Its function is as follows. Catalyzes the GTP-dependent ribosomal translocation step during translation elongation. During this step, the ribosome changes from the pre-translocational (PRE) to the post-translocational (POST) state as the newly formed A-site-bound peptidyl-tRNA and P-site-bound deacylated tRNA move to the P and E sites, respectively. Catalyzes the coordinated movement of the two tRNA molecules, the mRNA and conformational changes in the ribosome. This is Elongation factor G from Streptococcus pneumoniae (strain CGSP14).